Consider the following 1295-residue polypeptide: DNA-directed RNA polymerase subunit beta' (1295 aa).

Residues Cys66, Cys68, Cys81, and Cys84 each contribute to the Zn(2+) site. Mg(2+)-binding residues include Asp562, Asp564, and Asp566. The Zn(2+) site is built by Cys901, Cys975, Cys982, and Cys985.

The protein belongs to the RNA polymerase beta' chain family. As to quaternary structure, the RNAP catalytic core consists of 2 alpha, 1 beta, 1 beta' and 1 omega subunit. When a sigma factor is associated with the core the holoenzyme is formed, which can initiate transcription. Mg(2+) serves as cofactor. It depends on Zn(2+) as a cofactor.

The enzyme catalyses RNA(n) + a ribonucleoside 5'-triphosphate = RNA(n+1) + diphosphate. In terms of biological role, DNA-dependent RNA polymerase catalyzes the transcription of DNA into RNA using the four ribonucleoside triphosphates as substrates. The chain is DNA-directed RNA polymerase subunit beta' from Rubrobacter xylanophilus (strain DSM 9941 / JCM 11954 / NBRC 16129 / PRD-1).